A 543-amino-acid chain; its full sequence is Hydroxylamine reductase (543 aa).

Residues cysteine 3, cysteine 6, cysteine 15, and cysteine 21 each contribute to the [4Fe-4S] cluster site. Residues histidine 244, glutamate 268, cysteine 312, cysteine 399, cysteine 427, cysteine 452, glutamate 486, and lysine 488 each coordinate hybrid [4Fe-2O-2S] cluster. Cysteine persulfide is present on cysteine 399.

The protein belongs to the HCP family. [4Fe-4S] cluster is required as a cofactor. Hybrid [4Fe-2O-2S] cluster serves as cofactor.

It is found in the cytoplasm. The enzyme catalyses A + NH4(+) + H2O = hydroxylamine + AH2 + H(+). Catalyzes the reduction of hydroxylamine to form NH(3) and H(2)O. This chain is Hydroxylamine reductase, found in Methanocella arvoryzae (strain DSM 22066 / NBRC 105507 / MRE50).